The following is a 318-amino-acid chain: Tumor necrosis factor ligand superfamily member 11 (318 aa).

Topologically, residues 1-47 (MRRANRDYGKYLRGSEEMGSCPGVPHEGPLHPAPSAPAPAPPPAASR) are cytoplasmic. The interval 13 to 41 (RGSEEMGSCPGVPHEGPLHPAPSAPAPAP) is disordered. Residues 31–41 (HPAPSAPAPAP) are compositionally biased toward pro residues. Residues 48–68 (FMFLALLGLGLGQVVCSIALF) traverse the membrane as a helical; Signal-anchor for type II membrane protein segment. The Extracellular segment spans residues 69 to 318 (LYFRAQMDPN…FGAFKVQDID (250 aa)). Positions 165 to 314 (PFAHLTINAA…DATYFGAFKV (150 aa)) constitute a THD domain. Residues asparagine 199 and asparagine 264 are each glycosylated (N-linked (GlcNAc...) asparagine).

The protein belongs to the tumor necrosis factor family. As to quaternary structure, homotrimer. Interacts with TNFRSF11A and TNFRSF11B. Interacts with FBN1 (via N-terminal domain) in a Ca(+2)-dependent manner. Interacts with TNFAIP6 (via both Link and CUB domains). The soluble form derives from the membrane form by proteolytic processing. As to expression, highly expressed in thymus and bone tissues.

It localises to the cell membrane. The protein resides in the secreted. In terms of biological role, cytokine that binds to TNFRSF11B/OPG and to TNFRSF11A/RANK. Osteoclast differentiation and activation factor. Augments the ability of dendritic cells to stimulate naive T-cell proliferation. May be an important regulator of interactions between T-cells and dendritic cells and may play a role in the regulation of the T-cell-dependent immune response. May also play an important role in enhanced bone-resorption in humoral hypercalcemia of malignancy. Induces osteoclastogenesis by activating multiple signaling pathways in osteoclast precursor cells, chief among which is induction of long lasting oscillations in the intracellular concentration of Ca (2+) resulting in the activation of NFATC1, which translocates to the nucleus and induces osteoclast-specific gene transcription to allow differentiation of osteoclasts. During osteoclast differentiation, in a TMEM64 and ATP2A2-dependent manner induces activation of CREB1 and mitochondrial ROS generation necessary for proper osteoclast generation. The polypeptide is Tumor necrosis factor ligand superfamily member 11 (Tnfsf11) (Rattus norvegicus (Rat)).